Reading from the N-terminus, the 202-residue chain is ATP-dependent Clp protease proteolytic subunit (202 aa).

S106 (nucleophile) is an active-site residue. The active site involves H131.

It belongs to the peptidase S14 family. Fourteen ClpP subunits assemble into 2 heptameric rings which stack back to back to give a disk-like structure with a central cavity, resembling the structure of eukaryotic proteasomes.

The protein resides in the cytoplasm. It carries out the reaction Hydrolysis of proteins to small peptides in the presence of ATP and magnesium. alpha-casein is the usual test substrate. In the absence of ATP, only oligopeptides shorter than five residues are hydrolyzed (such as succinyl-Leu-Tyr-|-NHMec, and Leu-Tyr-Leu-|-Tyr-Trp, in which cleavage of the -Tyr-|-Leu- and -Tyr-|-Trp bonds also occurs).. In terms of biological role, cleaves peptides in various proteins in a process that requires ATP hydrolysis. Has a chymotrypsin-like activity. Plays a major role in the degradation of misfolded proteins. The sequence is that of ATP-dependent Clp protease proteolytic subunit from Shewanella sp. (strain ANA-3).